Reading from the N-terminus, the 346-residue chain is Large ribosomal subunit protein uL3 (346 aa).

The interval 324-346 (RPPKKKPPVERPQITYVSRESKQ) is disordered.

This sequence belongs to the universal ribosomal protein uL3 family. Part of the 50S ribosomal subunit. Forms a cluster with proteins L14 and L24e.

One of the primary rRNA binding proteins, it binds directly near the 3'-end of the 23S rRNA, where it nucleates assembly of the 50S subunit. This Thermococcus kodakarensis (strain ATCC BAA-918 / JCM 12380 / KOD1) (Pyrococcus kodakaraensis (strain KOD1)) protein is Large ribosomal subunit protein uL3.